The chain runs to 322 residues: Sideroflexin-1 (322 aa).

Ser2 bears the N-acetylserine mark. Residues Ser2–Thr102 are Mitochondrial matrix-facing. A helical transmembrane segment spans residues Ile103 to Trp120. The Mitochondrial intermembrane segment spans residues Gln121–Glu146. A helical membrane pass occupies residues Leu147–Ala167. Over Leu168–Pro174 the chain is Mitochondrial matrix. Residues Leu175–Leu195 form a helical membrane-spanning segment. The Mitochondrial intermembrane portion of the chain corresponds to Met196–Gln228. Residues Val229 to Asn249 form a helical membrane-spanning segment. Topologically, residues Thr250–Pro266 are mitochondrial matrix. A helical transmembrane segment spans residues Ile267–Phe287. Topologically, residues Pro288 to Leu322 are mitochondrial intermembrane.

Belongs to the sideroflexin family.

Its subcellular location is the mitochondrion inner membrane. It catalyses the reaction L-serine(in) = L-serine(out). The catalysed reaction is L-alanine(in) = L-alanine(out). The enzyme catalyses L-cysteine(in) = L-cysteine(out). Functionally, amino acid transporter importing serine, an essential substrate of the mitochondrial branch of the one-carbon pathway, into mitochondria. Mitochondrial serine is then converted to glycine and formate, which exits to the cytosol where it is used to generate the charged folates that serve as one-carbon donors. May also transport other amino acids including alanine and cysteine. The chain is Sideroflexin-1 (Sfxn1) from Rattus norvegicus (Rat).